A 228-amino-acid chain; its full sequence is Pyridoxamine 5'-phosphate oxidase (228 aa).

Position 20–23 (20–23) interacts with pyridoxal 5'-phosphate; the sequence is QYDK. Lysine 29 is covalently cross-linked (Glycyl lysine isopeptide (Lys-Gly) (interchain with G-Cter in ubiquitin)). 73 to 76 contacts FMN; the sequence is RILL. Lysine 78 serves as a coordination point for pyridoxal 5'-phosphate. FMN contacts are provided by residues 88–89, 95–96, and glutamine 118; these read YS and RK. Positions 136, 140, and 144 each coordinate pyridoxal 5'-phosphate. FMN is bound by residues 153–154 and tryptophan 199; that span reads QS. 205–207 contacts pyridoxal 5'-phosphate; the sequence is RLH. Arginine 209 contacts FMN.

It belongs to the pyridoxamine 5'-phosphate oxidase family. In terms of assembly, homodimer. It depends on FMN as a cofactor.

The protein localises to the mitochondrion intermembrane space. The catalysed reaction is pyridoxamine 5'-phosphate + O2 + H2O = pyridoxal 5'-phosphate + H2O2 + NH4(+). The enzyme catalyses pyridoxine 5'-phosphate + O2 = pyridoxal 5'-phosphate + H2O2. It functions in the pathway cofactor metabolism; pyridoxal 5'-phosphate salvage; pyridoxal 5'-phosphate from pyridoxamine 5'-phosphate: step 1/1. Its pathway is cofactor metabolism; pyridoxal 5'-phosphate salvage; pyridoxal 5'-phosphate from pyridoxine 5'-phosphate: step 1/1. Functionally, catalyzes the oxidation of either pyridoxine 5'-phosphate (PNP) or pyridoxamine 5'-phosphate (PMP) into pyridoxal 5'-phosphate (PLP). This Saccharomyces cerevisiae (strain ATCC 204508 / S288c) (Baker's yeast) protein is Pyridoxamine 5'-phosphate oxidase (PDX3).